The sequence spans 341 residues: UDP-3-O-acylglucosamine N-acyltransferase (341 aa).

Histidine 255 acts as the Proton acceptor in catalysis.

It belongs to the transferase hexapeptide repeat family. LpxD subfamily. Homotrimer.

The catalysed reaction is a UDP-3-O-[(3R)-3-hydroxyacyl]-alpha-D-glucosamine + a (3R)-hydroxyacyl-[ACP] = a UDP-2-N,3-O-bis[(3R)-3-hydroxyacyl]-alpha-D-glucosamine + holo-[ACP] + H(+). The protein operates within bacterial outer membrane biogenesis; LPS lipid A biosynthesis. Catalyzes the N-acylation of UDP-3-O-acylglucosamine using 3-hydroxyacyl-ACP as the acyl donor. Is involved in the biosynthesis of lipid A, a phosphorylated glycolipid that anchors the lipopolysaccharide to the outer membrane of the cell. This chain is UDP-3-O-acylglucosamine N-acyltransferase, found in Granulibacter bethesdensis (strain ATCC BAA-1260 / CGDNIH1).